The following is a 363-amino-acid chain: Actin-related protein 7 (363 aa).

Met1 carries the N-acetylmethionine modification.

The protein belongs to the actin family. Plant ARP7 subfamily. In terms of tissue distribution, mostly expressed in flowers, and, to a lower extent, in roots, seedlings, leaves and siliques (at protein level).

The protein localises to the nucleus. It is found in the cytoplasm. In terms of biological role, essential protein required during embryogenesis and all plant development stages, probably through a chromatin-mediated regulation of gene expression. The polypeptide is Actin-related protein 7 (ARP7) (Arabidopsis thaliana (Mouse-ear cress)).